Consider the following 259-residue polypeptide: Haloacid dehalogenase-like hydrolase domain-containing protein 2 (259 aa).

Asp-13 and Ser-15 together coordinate Mg(2+). Substrate contacts are provided by residues 13–15 (DLS) and 46–47 (TN). The stretch at 47-71 (NTTKESKQDLLERLRKLEFDISEDE) forms a coiled coil. Lys-50 is modified (N6-succinyllysine). Lys-179 lines the substrate pocket. Asp-204 serves as a coordination point for Mg(2+).

This sequence belongs to the HAD-like hydrolase superfamily. The cofactor is Mg(2+).

This is Haloacid dehalogenase-like hydrolase domain-containing protein 2 (HDHD2) from Pongo abelii (Sumatran orangutan).